The sequence spans 151 residues: Probable cyclic pyranopterin monophosphate synthase (151 aa).

Substrate-binding positions include M66–H68 and M102–E103. The active site involves D117.

This sequence belongs to the MoaC family. As to quaternary structure, homohexamer; trimer of dimers.

The enzyme catalyses (8S)-3',8-cyclo-7,8-dihydroguanosine 5'-triphosphate = cyclic pyranopterin phosphate + diphosphate. It participates in cofactor biosynthesis; molybdopterin biosynthesis. Functionally, catalyzes the conversion of (8S)-3',8-cyclo-7,8-dihydroguanosine 5'-triphosphate to cyclic pyranopterin monophosphate (cPMP). The protein is Probable cyclic pyranopterin monophosphate synthase of Sulfurisphaera tokodaii (strain DSM 16993 / JCM 10545 / NBRC 100140 / 7) (Sulfolobus tokodaii).